The sequence spans 186 residues: dTTP/UTP pyrophosphatase (186 aa).

The active-site Proton acceptor is the Asp-67.

Belongs to the Maf family. YhdE subfamily. The cofactor is a divalent metal cation.

It is found in the cytoplasm. The catalysed reaction is dTTP + H2O = dTMP + diphosphate + H(+). The enzyme catalyses UTP + H2O = UMP + diphosphate + H(+). In terms of biological role, nucleoside triphosphate pyrophosphatase that hydrolyzes dTTP and UTP. May have a dual role in cell division arrest and in preventing the incorporation of modified nucleotides into cellular nucleic acids. The chain is dTTP/UTP pyrophosphatase from Carboxydothermus hydrogenoformans (strain ATCC BAA-161 / DSM 6008 / Z-2901).